A 955-amino-acid chain; its full sequence is Glycine dehydrogenase (decarboxylating) (955 aa).

Position 705 is an N6-(pyridoxal phosphate)lysine (K705).

It belongs to the GcvP family. In terms of assembly, the glycine cleavage system is composed of four proteins: P, T, L and H. The cofactor is pyridoxal 5'-phosphate.

It carries out the reaction N(6)-[(R)-lipoyl]-L-lysyl-[glycine-cleavage complex H protein] + glycine + H(+) = N(6)-[(R)-S(8)-aminomethyldihydrolipoyl]-L-lysyl-[glycine-cleavage complex H protein] + CO2. In terms of biological role, the glycine cleavage system catalyzes the degradation of glycine. The P protein binds the alpha-amino group of glycine through its pyridoxal phosphate cofactor; CO(2) is released and the remaining methylamine moiety is then transferred to the lipoamide cofactor of the H protein. The chain is Glycine dehydrogenase (decarboxylating) from Aliivibrio fischeri (strain ATCC 700601 / ES114) (Vibrio fischeri).